The sequence spans 309 residues: Porphobilinogen deaminase (309 aa).

Cys241 carries the post-translational modification S-(dipyrrolylmethanemethyl)cysteine.

The protein belongs to the HMBS family. As to quaternary structure, monomer. It depends on dipyrromethane as a cofactor.

It catalyses the reaction 4 porphobilinogen + H2O = hydroxymethylbilane + 4 NH4(+). Its pathway is porphyrin-containing compound metabolism; protoporphyrin-IX biosynthesis; coproporphyrinogen-III from 5-aminolevulinate: step 2/4. Tetrapolymerization of the monopyrrole PBG into the hydroxymethylbilane pre-uroporphyrinogen in several discrete steps. The polypeptide is Porphobilinogen deaminase (Bacillus cereus (strain B4264)).